The sequence spans 73 residues: Protein RALF-like 10 (73 aa).

Residues 1–17 form the signal peptide; that stretch reads MKALVICLLVIFAAVIA. 2 cysteine pairs are disulfide-bonded: C35–C44 and C64–C70.

The protein belongs to the plant rapid alkalinization factor (RALF) family. In terms of tissue distribution, expressed in flowers.

It is found in the secreted. Its function is as follows. Cell signaling peptide that may regulate plant stress, growth, and development. Mediates a rapid alkalinization of extracellular space by mediating a transient increase in the cytoplasmic Ca(2+) concentration leading to a calcium-dependent signaling events through a cell surface receptor and a concomitant activation of some intracellular mitogen-activated protein kinases. This chain is Protein RALF-like 10 (RALFL10), found in Arabidopsis thaliana (Mouse-ear cress).